Reading from the N-terminus, the 1782-residue chain is A-kinase anchor protein 12 (1782 aa).

8 disordered regions span residues 1-53, 71-169, 189-400, 421-886, 938-1089, 1105-1134, 1157-1274, and 1305-1355; these read MGAG…DPAT, QDEL…QAND, KTEK…APLA, VSTV…ELSE, EREV…LKKE, PFTQGKVVGQTTPESFEKAPQVTESIESSE, AIPP…ADEK, and KGEG…HVNE. The N-myristoyl glycine moiety is linked to residue G2. Phosphoserine occurs at positions 11, 19, 28, 75, and 96. The segment covering 16–53 has biased composition (low complexity); that stretch reads PEGSSTPAEPEPSGGGPSAEAAPDTTADPAIAASDPAT. Residues 108 to 125 are compositionally biased toward basic and acidic residues; that stretch reads GQRDSEDVSKRDSDKEMA. Residues 145–154 are compositionally biased toward low complexity; sequence IIEQIPSSES. S154 bears the Phosphoserine mark. A compositionally biased stretch (polar residues) spans 157-168; sequence EELTQPTESQAN. Phosphoserine is present on residues S219, S248, S258, S280, S283, S286, S347, and S371. The segment covering 226–249 has biased composition (basic and acidic residues); sequence ASKESEPKQSTEKPEETLKREQSH. Residues 266–557 are involved in PKC-binding; that stretch reads KEEGEEKQEK…TQVPADSPDS (292 aa). Basic and acidic residues-rich tracts occupy residues 315–347 and 363–379; these read KPKEDEVEASEKKKEQEPEKVDTEEDGKAEVAS and ESAHEPRLSAEYEKVEL. Y374 bears the Phosphotyrosine mark. S381 and S392 each carry phosphoserine. Basic and acidic residues predominate over residues 423 to 435; it reads TVEERTEEQKTEV. Positions 446 to 456 are enriched in acidic residues; that stretch reads ELVEMDAEPQE. Positions 458 to 468 are enriched in basic and acidic residues; the sequence is EPAKELVKLKE. 2 positions are modified to phosphoserine: S483 and S505. A compositionally biased stretch (basic residues) spans 528-537; the sequence is LSGKKQKGKR. Phosphoserine is present on residues S554, S557, S598, S612, S627, and S629. Residues 607–627 carry the AKAP CaM-binding 1 motif; it reads VTPWASFKKMVTPKKRVRRPS. Over residues 625-639 the composition is skewed to basic and acidic residues; sequence RPSESDKEDELDKVK. Residues 640 to 652 show a composition bias toward low complexity; it reads SATLSSTESTASE. T642 carries the phosphothreonine modification. Phosphoserine is present on residues S644, S645, S648, and S651. The segment covering 655–674 has biased composition (basic and acidic residues); that stretch reads EEMKGSVEEPKPEEPKRKVD. S696, S697, and S698 each carry phosphoserine. Residues 708 to 724 show a composition bias toward basic and acidic residues; it reads GGDHQKADEAGKDKETG. Residues 739–749 show a composition bias toward polar residues; sequence QGSSSPEQAGS. Residues S749, S761, and S787 each carry the phosphoserine modification. An AKAP CaM-binding 2 motif is present at residues 756–776; the sequence is VSTWESFKRLVTPRKKSKSKL. The span at 792 to 803 shows a compositional bias: basic and acidic residues; sequence STPDTEPGKEES. Residues 801–821 carry the AKAP CaM-binding 3 motif; that stretch reads EESWVSIKKFIPGRRKKRPDG. Phosphoserine is present on S806. Over residues 986–997 the composition is skewed to low complexity; the sequence is GAEEGTEASAAE. K1051 is covalently cross-linked (Glycyl lysine isopeptide (Lys-Gly) (interchain with G-Cter in SUMO1)). Residues 1072 to 1089 are compositionally biased toward basic and acidic residues; the sequence is AEAERPEEQAEASGLKKE. Positions 1164-1174 are enriched in polar residues; the sequence is ETPTDSETDGS. 2 stretches are compositionally biased toward basic and acidic residues: residues 1187-1198 and 1231-1251; these read QKDEIVEIHEEN and EETKEQSKMEDTLEHTDKEVS. Positions 1253 to 1267 are enriched in polar residues; the sequence is ETVSILSKTEGTQEA. Phosphoserine occurs at positions 1328 and 1331. Basic and acidic residues predominate over residues 1333–1355; the sequence is VEREMVVQVEREKTEAEPTHVNE. S1391 and S1395 each carry phosphoserine. The segment at 1541–1554 is RII-binding; sequence ELETKSSKLVQNII. The tract at residues 1584 to 1782 is disordered; it reads KADSQDAGQE…ESAKSELTES (199 aa). A Phosphoserine modification is found at S1587. Polar residues predominate over residues 1603-1612; sequence ASAQDETPIT. Basic and acidic residues-rich tracts occupy residues 1629–1639 and 1675–1699; these read DISKDMSEASE and VPEDDGHALLAERIEKSLVEPKEDE. At S1727 the chain carries Phosphoserine. Basic and acidic residues-rich tracts occupy residues 1734–1757 and 1766–1782; these read KQKEKEDAQEVELQEGKVHSESDK and ELQKQERESAKSELTES.

Binds to dimeric RII-alpha regulatory subunit of PKC. In terms of tissue distribution, expressed in endothelial cells, cultured fibroblasts and osteosarcoma, but not in platelets, leukocytes, monocytic cell lines or peripherical blood cells.

It localises to the cytoplasm. It is found in the cell cortex. The protein localises to the cytoskeleton. The protein resides in the membrane. In terms of biological role, anchoring protein that mediates the subcellular compartmentation of protein kinase A (PKA) and protein kinase C (PKC). This Homo sapiens (Human) protein is A-kinase anchor protein 12 (AKAP12).